The following is a 125-amino-acid chain: uncharacterized protein (125 aa).

An HTH hxlR-type domain is found at 14 to 112 (CPVEFTLDVI…WGESNRDVLE (99 aa)).

This is an uncharacterized protein from Bacillus subtilis (strain 168).